We begin with the raw amino-acid sequence, 331 residues long: Phenol 2-monooxygenase, oxygenase component DmpL (331 aa).

The protein belongs to the TmoE/XamoE family. The multicomponent enzyme phenol hydroxylase is formed by DmpL (P1 component), DmpM (P2 component), DmpN (P3 component), DmpO (P4 component) and DmpP (P5 component). The oxygenase component is a dimer composed of three subunits, DmpL, DmpN and DmpO (DmpLNO). DmpL interacts with the auxiliary protein DmpK (P0 component).

The enzyme catalyses phenol + NADH + O2 + H(+) = catechol + NAD(+) + H2O. It participates in aromatic compound metabolism; phenol degradation. Requires DmpM for efficient turnover. The activity of DmpLNO oxygenase is inhibited by dithiothreitol (DTT) by a mechanism apparently involving H(2)O(2) generation. Its function is as follows. Part of a multicomponent enzyme which catalyzes the degradation of phenol and some of its methylated derivatives. DmpL, DmpN and DmpO form the oxygenase component of the complex. Required for growth on phenol and for in vitro phenol hydroxylase activity. The chain is Phenol 2-monooxygenase, oxygenase component DmpL from Pseudomonas sp. (strain CF600).